The primary structure comprises 176 residues: COA8 family protein CG14806, mitochondrial (176 aa).

A mitochondrion-targeting transit peptide spans 1–23; the sequence is MNKCFRCQPRISLFQFSLPRCYA.

Belongs to the COA8 family.

Its subcellular location is the mitochondrion inner membrane. In terms of biological role, may be required for cytochrome c complex (COX) assembly and function, COX being the terminal component of the mitochondrial respiratory chain. (Microbial infection) Required for optimal replication of E.chaffeensis. The protein is COA8 family protein CG14806, mitochondrial of Drosophila melanogaster (Fruit fly).